The chain runs to 114 residues: MSEVIEGNVKIDRLSPGDGKTFPKTGDLVTIHYTGTLENEQKFDSSVDRGSPFQCNIGVGQVIKGWDVAIPKLSVGEKARLTIPGAYAYGPRGFPGLIPPNATLIFEVELLKVN.

A PPIase FKBP-type domain is found at 26-114 (GDLVTIHYTG…IFEVELLKVN (89 aa)).

This sequence belongs to the FKBP-type PPIase family. FKBP1 subfamily.

It localises to the cytoplasm. The enzyme catalyses [protein]-peptidylproline (omega=180) = [protein]-peptidylproline (omega=0). With respect to regulation, inhibited by both FK506 and rapamycin. In terms of biological role, PPIases accelerate the folding of proteins. It catalyzes the cis-trans isomerization of proline imidic peptide bonds in oligopeptides. This is FK506-binding protein 1 (FPR1) from Eremothecium gossypii (strain ATCC 10895 / CBS 109.51 / FGSC 9923 / NRRL Y-1056) (Yeast).